We begin with the raw amino-acid sequence, 1102 residues long: Carbamoyl phosphate synthase large chain (1102 aa).

Residues 1–408 (MPKRSDIQSV…ALQKALRSLE (408 aa)) are carboxyphosphate synthetic domain. ATP contacts are provided by arginine 129, arginine 175, glycine 181, glycine 182, glutamate 214, isoleucine 216, glutamate 221, glycine 247, valine 248, histidine 249, glutamine 291, and glutamate 305. One can recognise an ATP-grasp 1 domain in the interval 137-334 (EAVKEKIGYG…IAKIAAKLAV (198 aa)). Residues glutamine 291, glutamate 305, and asparagine 307 each contribute to the Mg(2+) site. Positions 291, 305, and 307 each coordinate Mn(2+). The tract at residues 409–551 (KKGSQFAFTG…YFYSSYDEES (143 aa)) is oligomerization domain. The interval 552–954 (EVAPRTKPAV…AYAKSQAGAY (403 aa)) is carbamoyl phosphate synthetic domain. Residues 682–873 (GRVLAEAGLP…LAKAAARISL (192 aa)) enclose the ATP-grasp 2 domain. ATP contacts are provided by arginine 718, arginine 757, leucine 759, glutamate 764, glycine 789, isoleucine 790, histidine 791, serine 792, glutamine 832, and glutamate 844. Positions 832, 844, and 846 each coordinate Mg(2+). Mn(2+) contacts are provided by glutamine 832, glutamate 844, and asparagine 846. The MGS-like domain maps to 955–1100 (GPLPTAGRAF…QEHAEHLTAA (146 aa)). The allosteric domain stretch occupies residues 955-1102 (GPLPTAGRAF…HAEHLTAARD (148 aa)).

It belongs to the CarB family. In terms of assembly, composed of two chains; the small (or glutamine) chain promotes the hydrolysis of glutamine to ammonia, which is used by the large (or ammonia) chain to synthesize carbamoyl phosphate. Tetramer of heterodimers (alpha,beta)4. Mg(2+) serves as cofactor. Mn(2+) is required as a cofactor.

It carries out the reaction hydrogencarbonate + L-glutamine + 2 ATP + H2O = carbamoyl phosphate + L-glutamate + 2 ADP + phosphate + 2 H(+). It catalyses the reaction hydrogencarbonate + NH4(+) + 2 ATP = carbamoyl phosphate + 2 ADP + phosphate + 2 H(+). It functions in the pathway amino-acid biosynthesis; L-arginine biosynthesis; carbamoyl phosphate from bicarbonate: step 1/1. It participates in pyrimidine metabolism; UMP biosynthesis via de novo pathway; (S)-dihydroorotate from bicarbonate: step 1/3. In terms of biological role, large subunit of the glutamine-dependent carbamoyl phosphate synthetase (CPSase). CPSase catalyzes the formation of carbamoyl phosphate from the ammonia moiety of glutamine, carbonate, and phosphate donated by ATP, constituting the first step of 2 biosynthetic pathways, one leading to arginine and/or urea and the other to pyrimidine nucleotides. The large subunit (synthetase) binds the substrates ammonia (free or transferred from glutamine from the small subunit), hydrogencarbonate and ATP and carries out an ATP-coupled ligase reaction, activating hydrogencarbonate by forming carboxy phosphate which reacts with ammonia to form carbamoyl phosphate. The protein is Carbamoyl phosphate synthase large chain of Streptomyces griseus subsp. griseus (strain JCM 4626 / CBS 651.72 / NBRC 13350 / KCC S-0626 / ISP 5235).